A 368-amino-acid polypeptide reads, in one-letter code: Nuclease EXOG, mitochondrial (368 aa).

A mitochondrion-targeting transit peptide spans 1–41 (MAAKSFASRLRDSRRFLNGFLAGAVVGAAGAGLTALQFFRR). Catalysis depends on histidine 140, which acts as the Proton acceptor. A divalent metal cation is bound at residue asparagine 171.

It belongs to the DNA/RNA non-specific endonuclease family. As to quaternary structure, homodimer. A divalent metal cation serves as cofactor.

The protein localises to the mitochondrion inner membrane. Its function is as follows. Endo/exonuclease with nicking activity towards supercoiled DNA, a preference for single-stranded DNA and 5'-3' exonuclease activity. This chain is Nuclease EXOG, mitochondrial (Exog), found in Mus musculus (Mouse).